The primary structure comprises 339 residues: MQDKLNQIKELALVEIKEAKDSTTIDTIRVKYLGKKGELTTILRGMGSLSKEERPIVGKLANEVREVLEAELEAVTKAVKEAEKQEKLKNEVIDISMPGKKQTIGKKHPLEQTLDEMKKIFVSMGFAIEDGPEVEKDYYNFEALNIPKNHPARSEQDTFYINDNVVLRTQTSPVQARVMEKQQPPIKMISPGKVFRSDAVDATHSPIFYQMEGLVIDKDITFADLKGTLELFAKKMFGDKVKTKFRPHHFPFTEPSAEMDATCFVCNGKGCKVCKGEGWIEILGCGMVHPQVLRNCGIDPEVYSGFAFGFGVDRMVMLKYGIDDIRLLYESDMRFLNQF.

Residue Glu-254 coordinates Mg(2+).

Belongs to the class-II aminoacyl-tRNA synthetase family. Phe-tRNA synthetase alpha subunit type 1 subfamily. In terms of assembly, tetramer of two alpha and two beta subunits. Mg(2+) is required as a cofactor.

The protein resides in the cytoplasm. It catalyses the reaction tRNA(Phe) + L-phenylalanine + ATP = L-phenylalanyl-tRNA(Phe) + AMP + diphosphate + H(+). In Clostridium perfringens (strain ATCC 13124 / DSM 756 / JCM 1290 / NCIMB 6125 / NCTC 8237 / Type A), this protein is Phenylalanine--tRNA ligase alpha subunit.